A 231-amino-acid polypeptide reads, in one-letter code: Ribose-5-phosphate isomerase A (231 aa).

Residues 32–35, 85–88, and 98–101 contribute to the substrate site; these read TGST, DGAD, and KGGG. Glu-107 (proton acceptor) is an active-site residue. Substrate is bound at residue Lys-125.

This sequence belongs to the ribose 5-phosphate isomerase family. As to quaternary structure, homodimer.

It catalyses the reaction aldehydo-D-ribose 5-phosphate = D-ribulose 5-phosphate. It functions in the pathway carbohydrate degradation; pentose phosphate pathway; D-ribose 5-phosphate from D-ribulose 5-phosphate (non-oxidative stage): step 1/1. Catalyzes the reversible conversion of ribose-5-phosphate to ribulose 5-phosphate. The polypeptide is Ribose-5-phosphate isomerase A (Paraburkholderia xenovorans (strain LB400)).